Here is a 371-residue protein sequence, read N- to C-terminus: Ferrochelatase (371 aa).

2 residues coordinate Fe cation: H218 and E299.

It belongs to the ferrochelatase family.

Its subcellular location is the cytoplasm. It catalyses the reaction heme b + 2 H(+) = protoporphyrin IX + Fe(2+). Its pathway is porphyrin-containing compound metabolism; protoheme biosynthesis; protoheme from protoporphyrin-IX: step 1/1. Its function is as follows. Catalyzes the ferrous insertion into protoporphyrin IX. The sequence is that of Ferrochelatase from Cupriavidus metallidurans (strain ATCC 43123 / DSM 2839 / NBRC 102507 / CH34) (Ralstonia metallidurans).